The chain runs to 494 residues: Endoglucanase 1 (494 aa).

The first 25 residues, 1–25, serve as a signal peptide directing secretion; the sequence is MDCSSPLSLFHLLLVCTVMVKCCSA. D82 acts as the Nucleophile in catalysis. N254 and N359 each carry an N-linked (GlcNAc...) asparagine glycan. Residues H411, D462, and E471 contribute to the active site.

Belongs to the glycosyl hydrolase 9 (cellulase E) family.

It carries out the reaction Endohydrolysis of (1-&gt;4)-beta-D-glucosidic linkages in cellulose, lichenin and cereal beta-D-glucans.. Involved in ripening fruit process. This Persea americana (Avocado) protein is Endoglucanase 1 (CEL1).